The following is a 421-amino-acid chain: Gamma-glutamyl phosphate reductase (421 aa).

The protein belongs to the gamma-glutamyl phosphate reductase family.

Its subcellular location is the cytoplasm. It carries out the reaction L-glutamate 5-semialdehyde + phosphate + NADP(+) = L-glutamyl 5-phosphate + NADPH + H(+). The protein operates within amino-acid biosynthesis; L-proline biosynthesis; L-glutamate 5-semialdehyde from L-glutamate: step 2/2. Functionally, catalyzes the NADPH-dependent reduction of L-glutamate 5-phosphate into L-glutamate 5-semialdehyde and phosphate. The product spontaneously undergoes cyclization to form 1-pyrroline-5-carboxylate. The chain is Gamma-glutamyl phosphate reductase from Nitrosospira multiformis (strain ATCC 25196 / NCIMB 11849 / C 71).